A 632-amino-acid chain; its full sequence is tRNA uridine 5-carboxymethylaminomethyl modification enzyme MnmG (632 aa).

Residues 15 to 20, I127, and S182 contribute to the FAD site; that span reads GAGHAG. 276 to 290 contributes to the NAD(+) binding site; sequence GPRYCPSIEDKIVRF. Residue Q373 coordinates FAD.

Belongs to the MnmG family. Homodimer. Heterotetramer of two MnmE and two MnmG subunits. It depends on FAD as a cofactor.

The protein localises to the cytoplasm. In terms of biological role, NAD-binding protein involved in the addition of a carboxymethylaminomethyl (cmnm) group at the wobble position (U34) of certain tRNAs, forming tRNA-cmnm(5)s(2)U34. This is tRNA uridine 5-carboxymethylaminomethyl modification enzyme MnmG from Streptococcus pyogenes serotype M2 (strain MGAS10270).